The sequence spans 86 residues: U13-theraphotoxin-Cg1b (86 aa).

Residues 1–21 (MKVSVLITLAVLGVMFVWASA) form the signal peptide. A propeptide spanning residues 22 to 51 (AELEQSGSDQKDSPAWLKSMERIFQSEERE) is cleaved from the precursor. 3 disulfide bridges follow: Cys-52–Cys-66, Cys-59–Cys-71, and Cys-65–Cys-78.

Belongs to the neurotoxin 10 (Hwtx-1) family. 41 (Jztx-36) subfamily. Expressed by the venom gland.

The protein localises to the secreted. In terms of biological role, probable ion channel inhibitor. This is U13-theraphotoxin-Cg1b from Chilobrachys guangxiensis (Chinese earth tiger tarantula).